The primary structure comprises 153 residues: Pro-corazonin (153 aa).

The first 20 residues, 1–20 (MLRLLLLPLFLFTLSMACMG), serve as a signal peptide directing secretion. Residue Gln-21 is modified to Pyrrolidone carboxylic acid. At Asn-31 the chain carries Asparagine amide. A propeptide spanning residues 64–153 (LERCLLQLQH…AVEPNDYGKH (90 aa)) is cleaved from the precursor.

The protein belongs to the corazonin family. Expression is restricted to 24 neurons in the larval CNS (8 in the brain and 16 in the ventral nerve cord) and 12-16 neurons in the pars lateralis of the adult brain.

The protein localises to the secreted. Its function is as follows. Cardioactive peptide. Corazonin is probably involved in the physiological regulation of the heart beat. Clock (Clk) and cycle (cyc) proteins negatively regulate Crz transcription in a cell-specific manner. The polypeptide is Pro-corazonin (Crz) (Drosophila virilis (Fruit fly)).